Consider the following 889-residue polypeptide: Alanine--tRNA ligase (889 aa).

Zn(2+)-binding residues include His-569, His-573, Cys-671, and His-675.

It belongs to the class-II aminoacyl-tRNA synthetase family. Zn(2+) is required as a cofactor.

The protein localises to the cytoplasm. The catalysed reaction is tRNA(Ala) + L-alanine + ATP = L-alanyl-tRNA(Ala) + AMP + diphosphate. Functionally, catalyzes the attachment of alanine to tRNA(Ala) in a two-step reaction: alanine is first activated by ATP to form Ala-AMP and then transferred to the acceptor end of tRNA(Ala). Also edits incorrectly charged Ser-tRNA(Ala) and Gly-tRNA(Ala) via its editing domain. In Parasynechococcus marenigrum (strain WH8102), this protein is Alanine--tRNA ligase.